We begin with the raw amino-acid sequence, 339 residues long: Protein-lysine N-methyltransferase EFM3 (339 aa).

Residues W137 and 174–176 (GAG) contribute to the S-adenosyl-L-methionine site. T177 is subject to Phosphothreonine. S-adenosyl-L-methionine-binding residues include D199, W233, and A248.

Belongs to the class I-like SAM-binding methyltransferase superfamily. EEF2KMT family.

It is found in the cytoplasm. S-adenosyl-L-methionine-dependent protein-lysine N-methyltransferase that mono-, di- and trimethylates elongation factor 2 (EFT1/EFT2) at 'Lys-509'. This is Protein-lysine N-methyltransferase EFM3 from Saccharomyces cerevisiae (strain ATCC 204508 / S288c) (Baker's yeast).